The sequence spans 1132 residues: DNA topoisomerase 2 (1132 aa).

ATP is bound by residues asparagine 68, asparagine 100, 137 to 139 (SSN), and 150 to 157 (GKNGLGVK). The interaction with DNA stretch occupies residues 327 to 329 (NKP). Position 363 to 365 (363 to 365 (QNK)) interacts with ATP. The region spanning 442–577 (CTLIVCEGLS…NLKDFPFISS (136 aa)) is the Toprim domain. 3 residues coordinate Mg(2+): glutamate 448, aspartate 538, and aspartate 540. The 413-residue stretch at 713–1125 (LPHLIDGLKE…NEGQMWLKDI (413 aa)) folds into the Topo IIA-type catalytic domain. The active-site O-(5'-phospho-DNA)-tyrosine intermediate is tyrosine 803. The interaction with DNA stretch occupies residues 979–988 (KLRSYIHTSN).

This sequence belongs to the type II topoisomerase family. It depends on Mg(2+) as a cofactor. Mn(2+) is required as a cofactor. Requires Ca(2+) as cofactor.

It carries out the reaction ATP-dependent breakage, passage and rejoining of double-stranded DNA.. Can introduce negative superhelical turns into double-stranded circular DNA. This is DNA topoisomerase 2 (TOP2) from Acheta domesticus (House cricket).